The following is a 60-amino-acid chain: Mastoparan-VB1 (60 aa).

Positions 1–23 are cleaved as a signal peptide; it reads MKNTILLLFTAFIFLSGFFGMSA. Residues 24-45 constitute a propeptide that is removed on maturation; it reads EALADPKADPLAGPFPDADPDP. AXPX repeat units follow at residues 27-30, 31-34, 35-38, and 40-43; these read ADPK, ADPL, AGPF, and DADP. At Leu59 the chain carries Leucine amide.

As to expression, expressed by the venom gland.

Its subcellular location is the secreted. The protein resides in the target cell membrane. Antimicrobial peptide. Shows activity against both Gram-positive (S.aureus MIC=1.9-3.75 ug/ml) and -negative (E.coli MIC=15-60 ug/ml) bacteria, as well against fungi (C.albicans MIC=15 ug/ml). Also promotes moderate mast cell degranulation. Does not show hemolytic activity on rabbit and human erythrocytes. Its mast cell degranulation activity may be related to the activation of G-protein coupled receptors in mast cells as well as interaction with other proteins located in cell endosomal membranes in the mast cells. The protein is Mastoparan-VB1 of Vespa bicolor (Black shield wasp).